A 405-amino-acid polypeptide reads, in one-letter code: Arginine deiminase (405 aa).

C395 (amidino-cysteine intermediate) is an active-site residue.

The protein belongs to the arginine deiminase family.

It localises to the cytoplasm. The catalysed reaction is L-arginine + H2O = L-citrulline + NH4(+). It functions in the pathway amino-acid degradation; L-arginine degradation via ADI pathway; carbamoyl phosphate from L-arginine: step 1/2. The polypeptide is Arginine deiminase (Rhodococcus jostii (strain RHA1)).